Reading from the N-terminus, the 221-residue chain is Probable septum site-determining protein MinC (221 aa).

This sequence belongs to the MinC family. As to quaternary structure, interacts with MinD and FtsZ.

Cell division inhibitor that blocks the formation of polar Z ring septums. Rapidly oscillates between the poles of the cell to destabilize FtsZ filaments that have formed before they mature into polar Z rings. Prevents FtsZ polymerization. This chain is Probable septum site-determining protein MinC, found in Shewanella oneidensis (strain ATCC 700550 / JCM 31522 / CIP 106686 / LMG 19005 / NCIMB 14063 / MR-1).